Reading from the N-terminus, the 164-residue chain is Small ribosomal subunit protein uS5 (164 aa).

The region spanning 10-73 is the S5 DRBM domain; that stretch reads LEERVVAVNR…DDAKKNLIEV (64 aa).

It belongs to the universal ribosomal protein uS5 family. Part of the 30S ribosomal subunit. Contacts proteins S4 and S8.

In terms of biological role, with S4 and S12 plays an important role in translational accuracy. Located at the back of the 30S subunit body where it stabilizes the conformation of the head with respect to the body. The sequence is that of Small ribosomal subunit protein uS5 from Streptococcus pneumoniae serotype 2 (strain D39 / NCTC 7466).